Consider the following 194-residue polypeptide: Small ribosomal subunit protein eS7 (194 aa).

Belongs to the eukaryotic ribosomal protein eS7 family.

This Caenorhabditis elegans protein is Small ribosomal subunit protein eS7 (rps-7).